We begin with the raw amino-acid sequence, 206 residues long: Guanylate kinase (206 aa).

A Guanylate kinase-like domain is found at 5–183 (FNLLILSGPS…SKEIILSIAK (179 aa)). 12-19 (GPSGAGKS) is a binding site for ATP.

Belongs to the guanylate kinase family.

The protein localises to the cytoplasm. The enzyme catalyses GMP + ATP = GDP + ADP. In terms of biological role, essential for recycling GMP and indirectly, cGMP. This Helicobacter pylori (strain HPAG1) protein is Guanylate kinase.